The sequence spans 423 residues: Transcription factor AP-2-epsilon (423 aa).

The interval 1–108 is disordered; that stretch reads MLVHSYSSME…EDAGLLSQPH (108 aa). A compositionally biased stretch (low complexity) spans 14–27; it reads GLSSSSPGGRLSQL. Positions 50–55 match the PPxY motif motif; the sequence is YFPPPY. The span at 57–70 shows a compositional bias: low complexity; the sequence is QSSLSYSQSQDGGY. Residues 79–93 show a composition bias toward polar residues; it reads SLNSLHQHQQAAWHS. Residues 276–405 are H-S-H (helix-span-helix), dimerization; sequence RRKAANVTLL…YLLEALKLLD (130 aa).

The protein belongs to the AP-2 family. In terms of assembly, binds DNA as a dimer. Can form homodimers or heterodimers with other AP-2 family members.

The protein resides in the nucleus. In terms of biological role, sequence-specific DNA-binding protein that interacts with inducible viral and cellular enhancer elements to regulate transcription of selected genes. AP-2 factors bind to the consensus sequence 5'-GCCNNNGGC-3' and activate genes involved in a large spectrum of important biological functions. This chain is Transcription factor AP-2-epsilon, found in Danio rerio (Zebrafish).